Reading from the N-terminus, the 694-residue chain is Follicle-stimulating hormone receptor (694 aa).

The first 17 residues, 1 to 17 (MALLLVSLLAFLSLGSG), serve as a signal peptide directing secretion. Disulfide bonds link Cys18/Cys25 and Cys23/Cys32. An LRRNT domain is found at 18-46 (CHHRVCHCSNRVFLCQESKVTEIPSDLPR). The Extracellular portion of the chain corresponds to 18–365 (CHHRVCHCSN…EDIMGYDILR (348 aa)). LRR repeat units follow at residues 49–72 (LELR…FGDL), 73–97 (EKIE…LPKL), 98–118 (HEIR…AFQN), 119–143 (LPNL…KIQS), 144–169 (LQKV…MGLS), 170–192 (FEST…AFNG), 193–216 (TQLD…VFQG), 217–240 (ASGP…GLEN), and 241–259 (LKKL…PSLE). 2 N-linked (GlcNAc...) asparagine glycosylation sites follow: Asn191 and Asn199. Asn268 carries N-linked (GlcNAc...) asparagine glycosylation. 4 disulfides stabilise this stretch: Cys275-Cys345, Cys276-Cys292, Cys276-Cys355, and Cys292-Cys337. Asn293 is a glycosylation site (N-linked (GlcNAc...) asparagine). The residue at position 334 (Tyr334) is a Sulfotyrosine. A helical transmembrane segment spans residues 366–386 (VLIWFISILAITGNIIVLVIL). Residues 387–397 (ITSQYKLTVPR) are Cytoplasmic-facing. A helical membrane pass occupies residues 398 to 420 (FLMCNLAFADLCIGIYLLLIASV). Topologically, residues 421 to 442 (DIHTKSQYHNYAIDWQTGAGCD) are extracellular. Cys441 and Cys516 are joined by a disulfide. The helical transmembrane segment at 443 to 464 (AAGFFTVFASELSVYTLTAITL) threads the bilayer. Over 465–484 (ERWHTITHAMQLECKVQLRH) the chain is Cytoplasmic. Residues 485-507 (AASVMLVGWIFAFAVALLPIFGI) traverse the membrane as a helical segment. Topologically, residues 508-527 (STYMKVSICLPMDIDSPLSQ) are extracellular. Residues 528 to 549 (LYVMSLLVLNVLAFVVICGCYI) form a helical membrane-spanning segment. The Cytoplasmic portion of the chain corresponds to 550-572 (HIYLTVRNPNIVSSSSDTKIAKR). A helical transmembrane segment spans residues 573-596 (MAILIFTDFLCMAPISFFAISASL). Topologically, residues 597–607 (KVPLITVSKSK) are extracellular. A helical membrane pass occupies residues 608–629 (ILLVLFYPINSCANPFLYAIFT). Residues 630-694 (KNFRRDFFIL…LVPLSHLAQN (65 aa)) lie on the Cytoplasmic side of the membrane.

It belongs to the G-protein coupled receptor 1 family. FSH/LSH/TSH subfamily. Homotrimer. Functions as a homotrimer binding the FSH hormone heterodimer composed of CGA and FSHB. Interacts with ARRB2. Interacts with APPL2; interaction is independent of follicle stimulating hormone stimulation. Post-translationally, N-glycosylated; indirectly required for FSH-binding, possibly via a conformational change that allows high affinity binding of hormone. In terms of processing, sulfated.

It localises to the cell membrane. Its function is as follows. G protein-coupled receptor for follitropin, the follicle-stimulating hormone. Through cAMP production activates the downstream PI3K-AKT and ERK1/ERK2 signaling pathways. This chain is Follicle-stimulating hormone receptor (FSHR), found in Equus caballus (Horse).